The sequence spans 122 residues: Heat-labile enterotoxin IIB, B chain (122 aa).

An N-terminal signal peptide occupies residues 1–23; the sequence is MSFKKIIKAFVIMAALVSVQAHA. A disulfide bridge links C33 with C104.

In terms of assembly, heterohexamer of one A chain and of five B chains.

Functionally, the biological activity of the toxin is produced by the A chain, which activates intracellular adenyl cyclase. The polypeptide is Heat-labile enterotoxin IIB, B chain (Escherichia coli).